A 441-amino-acid chain; its full sequence is Tubulin beta chain (441 aa).

GTP contacts are provided by Gln-11, Glu-69, Ser-138, Gly-142, Thr-143, Gly-144, Asn-204, and Asn-226. Glu-69 provides a ligand contact to Mg(2+).

Belongs to the tubulin family. As to quaternary structure, dimer of alpha and beta chains. A typical microtubule is a hollow water-filled tube with an outer diameter of 25 nm and an inner diameter of 15 nM. Alpha-beta heterodimers associate head-to-tail to form protofilaments running lengthwise along the microtubule wall with the beta-tubulin subunit facing the microtubule plus end conferring a structural polarity. Microtubules usually have 13 protofilaments but different protofilament numbers can be found in some organisms and specialized cells. Mg(2+) serves as cofactor.

The protein resides in the cytoplasm. The protein localises to the cytoskeleton. In terms of biological role, tubulin is the major constituent of microtubules, a cylinder consisting of laterally associated linear protofilaments composed of alpha- and beta-tubulin heterodimers. Microtubules grow by the addition of GTP-tubulin dimers to the microtubule end, where a stabilizing cap forms. Below the cap, tubulin dimers are in GDP-bound state, owing to GTPase activity of alpha-tubulin. The chain is Tubulin beta chain from Babesia bovis.